A 126-amino-acid polypeptide reads, in one-letter code: Fluoride-specific ion channel FluC (126 aa).

4 helical membrane passes run 5-25 (ILVAAGGAIGASLRYLLGAGV), 37-57 (VAIMMANVLGSIAMGFFVVWA), 65-85 (LSPFVMTGVLGGFTTFSAFSL), and 101-121 (LYVALSVGLSVFGLMAGLWVA). Residues G75 and T78 each coordinate Na(+).

It belongs to the fluoride channel Fluc/FEX (TC 1.A.43) family.

It is found in the cell inner membrane. The catalysed reaction is fluoride(in) = fluoride(out). With respect to regulation, na(+) is not transported, but it plays an essential structural role and its presence is essential for fluoride channel function. Functionally, fluoride-specific ion channel. Important for reducing fluoride concentration in the cell, thus reducing its toxicity. This is Fluoride-specific ion channel FluC from Roseobacter denitrificans (strain ATCC 33942 / OCh 114) (Erythrobacter sp. (strain OCh 114)).